A 372-amino-acid chain; its full sequence is Alanine dehydrogenase 2 (372 aa).

The active site involves His-95. 169–199 serves as a coordination point for NAD(+); the sequence is KVTIIGGGQAGTNAAKIALGLGADVTILDVN.

Belongs to the AlaDH/PNT family.

The catalysed reaction is L-alanine + NAD(+) + H2O = pyruvate + NH4(+) + NADH + H(+). The protein operates within amino-acid degradation; L-alanine degradation via dehydrogenase pathway; NH(3) and pyruvate from L-alanine: step 1/1. In terms of biological role, may play a role in cell wall synthesis as L-alanine is an important constituent of the peptidoglycan layer. The chain is Alanine dehydrogenase 2 (ald2) from Staphylococcus aureus (strain N315).